Here is a 226-residue protein sequence, read N- to C-terminus: MVKLGCSFSGKPGKEAGDQDGAAMDSVPLISPLDVSQLQPSFSDQVVINTQTEYQLTSADQPKKFADLEGQRLACSHSEEGRRLPTARMIAFAMALLGCVLIMYKAIWYDQFTCPDGFLLRHKICTPLTLEMYYTEMDPERHRSILAAIGAYPLSRKHGTEMPAVWGNNYRTAKEEHKGTTPAAMAVSTAAAAAAAEGTEPSGKSLDTREKEDPQKAEGVPSQPPK.

Residues 1–21 form a disordered region; it reads MVKLGCSFSGKPGKEAGDQDG. Over 1-88 the chain is Extracellular; sequence MVKLGCSFSG…EEGRRLPTAR (88 aa). The helical transmembrane segment at 89-109 threads the bilayer; the sequence is MIAFAMALLGCVLIMYKAIWY. Topologically, residues 110-226 are cytoplasmic; the sequence is DQFTCPDGFL…AEGVPSQPPK (117 aa). The segment at 177–226 is disordered; the sequence is HKGTTPAAMAVSTAAAAAAAEGTEPSGKSLDTREKEDPQKAEGVPSQPPK. Residues 183–196 show a composition bias toward low complexity; sequence AAMAVSTAAAAAAA. Residues 206 to 216 are compositionally biased toward basic and acidic residues; the sequence is LDTREKEDPQK.

It belongs to the NSG family. Interacts with CLTA. In terms of tissue distribution, most abundant in brain. Also expressed in testis and ovary and, at much lower levels, in kidney and heart.

The protein resides in the cytoplasmic vesicle membrane. Its subcellular location is the cell membrane. Interacts with clathrin light chain A and stimulates clathrin self-assembly and clathrin-mediated endocytosis. The chain is Neuron-specific vesicular protein calcyon (Caly) from Mus musculus (Mouse).